We begin with the raw amino-acid sequence, 617 residues long: Serine/threonine-protein kinase par-4 (617 aa).

Residues 1-11 (MDAPSTSSGAQ) show a composition bias toward polar residues. Positions 1–59 (MDAPSTSSGAQSKLLMPGDDEADEDHQNRGDPNLQQKQKIQLNVDPDYDDDEDDDCFID) are disordered. Acidic residues predominate over residues 46–57 (PDYDDDEDDDCF). A Protein kinase domain is found at 183–446 (YMWGGQIGTG…CLETMIHPWF (264 aa)). Residues 189-197 (IGTGSYGKV) and Lys212 contribute to the ATP site. Residue Asp310 is the Proton acceptor of the active site. The segment at 523–617 (LEAKPGDGPD…CIFRSRTDSA (95 aa)) is disordered. Pro residues predominate over residues 587–597 (DPPPTAAPGAP).

The protein belongs to the protein kinase superfamily. CAMK Ser/Thr protein kinase family. LKB1 subfamily. In terms of assembly, interacts with strd-1. It depends on Mg(2+) as a cofactor. Mn(2+) serves as cofactor. Expressed in the gonads, oocytes and early embryos (at protein level).

The protein resides in the cytoplasm. It localises to the cell cortex. It catalyses the reaction L-seryl-[protein] + ATP = O-phospho-L-seryl-[protein] + ADP + H(+). It carries out the reaction L-threonyl-[protein] + ATP = O-phospho-L-threonyl-[protein] + ADP + H(+). Its function is as follows. Required for cytoplasmic partitioning and asymmetric cell division in early embryogenesis. Controls the asymmetric cell division of the Q.p neuroblast lineage. Involved in mediating cell polarization via regulation of anillin family scaffold proteins. Phosphorylates and restricts the asymmetry effectors mex-5 and mex-6 to the anterior cytoplasm of the zygote and maintains these phosphorylations until fertilization. May phosphorylate par-1. Required for strd-1 localization to the cell cortex of early embryos and may be required for strd-1 protein stabilization. May regulate the integrity of the early embryonic cortex in a strd-1-dependent manner. Phosphorylates and regulates aak-2 in response to oxidative stress and during dauer development. May also play a role in motility, behavioral response, regulation of lifespan and dauer formation through this pathway. Required to establish germline stem cell (GSC) quiescence during dauer development. Acts downstream of unc-40 in dendrite outgrowth. May play a role in cell shedding during embryogenesis, probably by phosphorylating pig-1. This is Serine/threonine-protein kinase par-4 (par-4) from Caenorhabditis elegans.